The following is a 342-amino-acid chain: tRNA N6-adenosine threonylcarbamoyltransferase (342 aa).

2 residues coordinate Fe cation: His-115 and His-119. Residues 138–142, Asp-171, Gly-184, and Asn-276 contribute to the substrate site; that span reads LVSGG. Residue Asp-304 participates in Fe cation binding.

It belongs to the KAE1 / TsaD family. Fe(2+) is required as a cofactor.

The protein resides in the cytoplasm. The catalysed reaction is L-threonylcarbamoyladenylate + adenosine(37) in tRNA = N(6)-L-threonylcarbamoyladenosine(37) in tRNA + AMP + H(+). Required for the formation of a threonylcarbamoyl group on adenosine at position 37 (t(6)A37) in tRNAs that read codons beginning with adenine. Is involved in the transfer of the threonylcarbamoyl moiety of threonylcarbamoyl-AMP (TC-AMP) to the N6 group of A37, together with TsaE and TsaB. TsaD likely plays a direct catalytic role in this reaction. This is tRNA N6-adenosine threonylcarbamoyltransferase from Dichelobacter nodosus (strain VCS1703A).